Here is a 36-residue protein sequence, read N- to C-terminus: Photosystem I reaction center subunit VIII (36 aa).

The chain crosses the membrane as a helical span at residues 7 to 29 (PSILVPLVGILLPAVTMASLFLY).

The protein belongs to the PsaI family.

Its subcellular location is the plastid. It localises to the chloroplast thylakoid membrane. Its function is as follows. May help in the organization of the PsaL subunit. This chain is Photosystem I reaction center subunit VIII, found in Adiantum capillus-veneris (Maidenhair fern).